The primary structure comprises 867 residues: Probable beta-glucosidase A (867 aa).

The signal sequence occupies residues 1 to 18 (MRFSWLEVAVTAASLANA). N67, N218, and N259 each carry an N-linked (GlcNAc...) asparagine glycan. The active site involves D287. N322, N329, N361, N449, N530, N549, N571, N675, and N719 each carry an N-linked (GlcNAc...) asparagine glycan.

Belongs to the glycosyl hydrolase 3 family.

It localises to the secreted. It catalyses the reaction Hydrolysis of terminal, non-reducing beta-D-glucosyl residues with release of beta-D-glucose.. Its pathway is glycan metabolism; cellulose degradation. In terms of biological role, beta-glucosidases are one of a number of cellulolytic enzymes involved in the degradation of cellulosic biomass. Catalyzes the last step releasing glucose from the inhibitory cellobiose. The sequence is that of Probable beta-glucosidase A (bglA) from Aspergillus clavatus (strain ATCC 1007 / CBS 513.65 / DSM 816 / NCTC 3887 / NRRL 1 / QM 1276 / 107).